Here is a 1402-residue protein sequence, read N- to C-terminus: Erbin (1402 aa).

17 LRR repeats span residues Thr-23 to Phe-44, Thr-47 to Cys-68, Ser-70 to Leu-91, Asn-93 to Cys-114, Val-116 to Leu-137, Asn-139 to Thr-161, Lys-162 to Leu-183, Gln-185 to Leu-206, Gly-208 to Leu-229, Gln-231 to Cys-252, Asn-254 to Leu-275, Asn-277 to Leu-298, Ser-300 to Leu-321, Asn-323 to Trp-344, Asn-346 to Met-367, Lys-369 to Gln-391, and Gln-392 to Thr-413. Ser-440 and Ser-444 each carry phosphoserine. 2 disordered regions span residues Asp-465–Asp-489 and Asp-507–Ser-543. Residues Glu-470–Leu-480 show a composition bias toward basic and acidic residues. Tyr-483 carries the post-translational modification Phosphotyrosine. At Thr-485 the chain carries Phosphothreonine. Residues Asp-507 to Lys-534 show a composition bias toward basic and acidic residues. Ser-595, Ser-599, Ser-600, and Ser-617 each carry phosphoserine. The span at Asn-629–Asp-638 shows a compositional bias: basic and acidic residues. Residues Asn-629–Gln-694 are disordered. Low complexity predominate over residues Asn-647–Ser-659. Over residues Arg-660–Asn-689 the composition is skewed to polar residues. Phosphoserine is present on residues Ser-712, Ser-849, Ser-854, and Ser-869. Residues Glu-824–Val-864 form a disordered region. Phosphothreonine is present on Thr-914. Tyr-917 bears the Phosphotyrosine mark. Position 928 is a phosphoserine (Ser-928). Position 970 is a phosphotyrosine (Tyr-970). Disordered stretches follow at residues Trp-990–Ser-1018 and Thr-1070–Thr-1093. Over residues Thr-1070–Val-1084 the composition is skewed to polar residues. Tyr-1097 carries the post-translational modification Phosphotyrosine. Disordered stretches follow at residues Gly-1107 to Asp-1187, Ala-1198 to Asp-1217, and Glu-1222 to His-1274. 2 stretches are compositionally biased toward polar residues: residues Gly-1128–Pro-1139 and Met-1149–Arg-1164. Phosphoserine is present on residues Ser-1150 and Ser-1171. A phosphoserine mark is found at Leu-1231, Arg-1234, and Ser-1276. Positions Glu-1311–Val-1400 constitute a PDZ domain.

Belongs to the LAP (LRR and PDZ) protein family. As to quaternary structure, interacts with ERBB2, BPAG1 and ITGB4. May favor the localization of ERBB2, by restricting its presence to the basolateral membrane of epithelial cells. Also found to interact with ARVCF and delta catenin. Interacts (via C-terminus) with DST (via N-terminus). Interacts with NOD2 (via CARD domain). Post-translationally, isoform 2 is phosphorylated on Ser-1231 and Ser-1234.

The protein localises to the cell junction. It is found in the hemidesmosome. Its subcellular location is the nucleus membrane. It localises to the basolateral cell membrane. Its function is as follows. Acts as an adapter for the receptor ERBB2, in epithelia. By binding the unphosphorylated ERBB2 'Tyr-1248' receptor, it may contribute to stabilize this unphosphorylated state. Inhibits NOD2-dependent NF-kappa-B signaling and pro-inflammatory cytokine secretion. In Mus musculus (Mouse), this protein is Erbin.